The chain runs to 30 residues: Trypsin inhibitor 4 (30 aa).

Intrachain disulfides connect C3–C20, C10–C22, and C16–C29.

The protein belongs to the protease inhibitor I7 (squash-type serine protease inhibitor) family.

The protein localises to the secreted. Its function is as follows. Inhibits trypsin. This is Trypsin inhibitor 4 from Cucumis sativus (Cucumber).